A 295-amino-acid polypeptide reads, in one-letter code: Pyridoxal 5'-phosphate synthase subunit PdxS (295 aa).

Asp25 provides a ligand contact to D-ribose 5-phosphate. The active-site Schiff-base intermediate with D-ribose 5-phosphate is the Lys82. Gly154 contacts D-ribose 5-phosphate. Arg166 is a binding site for D-glyceraldehyde 3-phosphate. Residues Gly215 and 236–237 (GS) each bind D-ribose 5-phosphate.

The protein belongs to the PdxS/SNZ family. In the presence of PdxT, forms a dodecamer of heterodimers.

The catalysed reaction is aldehydo-D-ribose 5-phosphate + D-glyceraldehyde 3-phosphate + L-glutamine = pyridoxal 5'-phosphate + L-glutamate + phosphate + 3 H2O + H(+). Its pathway is cofactor biosynthesis; pyridoxal 5'-phosphate biosynthesis. Functionally, catalyzes the formation of pyridoxal 5'-phosphate from ribose 5-phosphate (RBP), glyceraldehyde 3-phosphate (G3P) and ammonia. The ammonia is provided by the PdxT subunit. Can also use ribulose 5-phosphate and dihydroxyacetone phosphate as substrates, resulting from enzyme-catalyzed isomerization of RBP and G3P, respectively. This is Pyridoxal 5'-phosphate synthase subunit PdxS from Staphylococcus saprophyticus subsp. saprophyticus (strain ATCC 15305 / DSM 20229 / NCIMB 8711 / NCTC 7292 / S-41).